The primary structure comprises 561 residues: DNA ligase B (561 aa).

Lys-125 functions as the N6-AMP-lysine intermediate in the catalytic mechanism.

This sequence belongs to the NAD-dependent DNA ligase family. LigB subfamily.

The enzyme catalyses NAD(+) + (deoxyribonucleotide)n-3'-hydroxyl + 5'-phospho-(deoxyribonucleotide)m = (deoxyribonucleotide)n+m + AMP + beta-nicotinamide D-nucleotide.. Catalyzes the formation of phosphodiester linkages between 5'-phosphoryl and 3'-hydroxyl groups in double-stranded DNA using NAD as a coenzyme and as the energy source for the reaction. The protein is DNA ligase B of Salmonella paratyphi A (strain AKU_12601).